The following is a 206-amino-acid chain: Flavin reductase (NADPH) (206 aa).

The NADP(+) site is built by glycine 10, threonine 12, glycine 13, glutamine 14, threonine 15, arginine 35, serine 38, and arginine 39. The residue at position 42 (serine 42) is a Phosphoserine. 5 residues coordinate NADP(+): aspartate 54, valine 55, leucine 75, glycine 76, and arginine 78. Position 82 is a phosphoserine (serine 82). Residues methionine 87, cysteine 109, histidine 132, histidine 153, and isoleucine 154 each contribute to the NADP(+) site. Cysteine 109 functions as the S-nitroso-cysteine intermediate; for S-nitroso-CoA-dependent nitrosyltransferase activity in the catalytic mechanism. Cysteine 188 serves as the catalytic S-nitroso-cysteine intermediate; for S-nitroso-CoA-dependent nitrosyltransferase activity.

Belongs to the BLVRB family. As to quaternary structure, monomer. Predominantly expressed in liver and erythrocytes. At lower levels in heart, lung, adrenal gland and cerebrum. Expressed in adult red blood cells.

The protein resides in the cytoplasm. It catalyses the reaction reduced riboflavin + NADP(+) = riboflavin + NADPH + 2 H(+). The enzyme catalyses bilirubin IXbeta + NADP(+) = biliverdin IXbeta + NADPH + H(+). The catalysed reaction is FMNH2 + NAD(+) = FMN + NADH + 2 H(+). It carries out the reaction FMNH2 + NADP(+) = FMN + NADPH + 2 H(+). It catalyses the reaction S-nitroso-CoA + L-cysteinyl-[protein] = S-nitroso-L-cysteinyl-[protein] + CoA. The enzyme catalyses L-cysteinyl-[SCAN] + S-nitroso-CoA = S-nitroso-L-cysteinyl-[SCAN] + CoA. The catalysed reaction is S-nitroso-L-cysteinyl-[SCAN] + L-cysteinyl-[protein] = L-cysteinyl-[SCAN] + S-nitroso-L-cysteinyl-[protein]. With respect to regulation, mesobiliverdin acts as a competitive inhibitor for flavin reduction, indicating that flavin and tetrapyrrole substrates compete for the same site. Inhibited by a wide range of xanthene-based drugs, such as phloxine B, erythrosin B, tamibarotene, sulfasalazine, olsalazine, febuxostat, ataluren (PTC124) and deferasirox. Its function is as follows. Enzyme that can both act as a NAD(P)H-dependent reductase and a S-nitroso-CoA-dependent nitrosyltransferase. Promotes fetal heme degradation during development. Also expressed in adult tissues, where it acts as a regulator of hematopoiesis, intermediary metabolism (glutaminolysis, glycolysis, TCA cycle and pentose phosphate pathway) and insulin signaling. Has a broad specificity oxidoreductase activity by catalyzing the NAD(P)H-dependent reduction of a variety of flavins, such as riboflavin, FAD or FMN, biliverdins, methemoglobin and PQQ (pyrroloquinoline quinone). Contributes to fetal heme catabolism by catalyzing reduction of biliverdin IXbeta into bilirubin IXbeta in the liver. Biliverdin IXbeta, which constitutes the major heme catabolite in the fetus is not present in adult. Does not reduce bilirubin IXalpha. Can also reduce the complexed Fe(3+) iron to Fe(2+) in the presence of FMN and NADPH. Acts as a protein nitrosyltransferase by catalyzing nitrosylation of cysteine residues of target proteins, such as HMOX2, INSR and IRS1. S-nitroso-CoA-dependent nitrosyltransferase activity is mediated via a 'ping-pong' mechanism: BLVRB first associates with both S-nitroso-CoA and protein substrate, nitric oxide group is then transferred from S-nitroso-CoA to Cys-109 and Cys-188 residues of BLVRB and from S-nitroso-BLVRB to the protein substrate. Inhibits insulin signaling by mediating nitrosylation of INSR and IRS1, leading to their inhibition. The protein is Flavin reductase (NADPH) of Homo sapiens (Human).